A 201-amino-acid chain; its full sequence is Adenylyl-sulfate kinase (201 aa).

35-42 (GLSGSGKS) lines the ATP pocket. Serine 109 (phosphoserine intermediate) is an active-site residue.

It belongs to the APS kinase family.

The catalysed reaction is adenosine 5'-phosphosulfate + ATP = 3'-phosphoadenylyl sulfate + ADP + H(+). Its pathway is sulfur metabolism; hydrogen sulfide biosynthesis; sulfite from sulfate: step 2/3. In terms of biological role, catalyzes the synthesis of activated sulfate. In Klebsiella pneumoniae (strain 342), this protein is Adenylyl-sulfate kinase.